We begin with the raw amino-acid sequence, 260 residues long: MTAETERIGVKGGMEYSFGFTKIDEAQKQSMVDGVFHSVAENYDKMNDILSLGLHRTWKNSMVAWLSPPALSNWKVLDVAGGTGDIAFRILNASRKKAHATVLDINSSMLSVGKKRAQKNGLAPLTDFVEANAEHLPFEDQSFDAYTIAFGIRNVPHINQALREAFRVLKPGGRFLCLEFSNVEMPLLNKIYDLWSFHVIPKLGQFIADNGDAYRYLVESIRKFPKQDDFSHMLNHAGFSRVSYRNLTGAIAALHSAWKI.

Residues T83, D104, and N132–A133 contribute to the S-adenosyl-L-methionine site.

This sequence belongs to the class I-like SAM-binding methyltransferase superfamily. MenG/UbiE family.

The catalysed reaction is a 2-demethylmenaquinol + S-adenosyl-L-methionine = a menaquinol + S-adenosyl-L-homocysteine + H(+). The enzyme catalyses a 2-methoxy-6-(all-trans-polyprenyl)benzene-1,4-diol + S-adenosyl-L-methionine = a 5-methoxy-2-methyl-3-(all-trans-polyprenyl)benzene-1,4-diol + S-adenosyl-L-homocysteine + H(+). The protein operates within quinol/quinone metabolism; menaquinone biosynthesis; menaquinol from 1,4-dihydroxy-2-naphthoate: step 2/2. Its pathway is cofactor biosynthesis; ubiquinone biosynthesis. Its function is as follows. Methyltransferase required for the conversion of demethylmenaquinol (DMKH2) to menaquinol (MKH2) and the conversion of 2-polyprenyl-6-methoxy-1,4-benzoquinol (DDMQH2) to 2-polyprenyl-3-methyl-6-methoxy-1,4-benzoquinol (DMQH2). This chain is Ubiquinone/menaquinone biosynthesis C-methyltransferase UbiE, found in Bartonella quintana (strain Toulouse) (Rochalimaea quintana).